Consider the following 292-residue polypeptide: Xanthine dehydrogenase FAD-binding subunit (292 aa).

Positions 1 to 176 (MFDFASYHRA…VAFHFPPQPK (176 aa)) constitute an FAD-binding PCMH-type domain. FAD is bound by residues 27–34 (KLLAGGTD), 109–113 (ATYGG), I165, and F184.

Heterotrimer of XdhA, XdhB and XdhC. Requires FAD as cofactor.

It carries out the reaction xanthine + NAD(+) + H2O = urate + NADH + H(+). The enzyme catalyses hypoxanthine + NAD(+) + H2O = xanthine + NADH + H(+). It participates in purine metabolism; hypoxanthine degradation; urate from hypoxanthine: step 1/2. Its pathway is purine metabolism; hypoxanthine degradation; urate from hypoxanthine: step 2/2. Its function is as follows. Presumed to be a dehydrogenase, but possibly an oxidase. Participates in limited purine salvage (requires aspartate) but does not support aerobic growth on purines as the sole carbon source (purine catabolism). In Escherichia coli O157:H7, this protein is Xanthine dehydrogenase FAD-binding subunit (xdhB).